Consider the following 350-residue polypeptide: Lipoyl synthase, mitochondrial (350 aa).

[4Fe-4S] cluster is bound by residues Cys83, Cys88, Cys94, Cys113, Cys117, Cys120, and Ser328. The 222-residue stretch at 96 to 317 folds into the Radical SAM core domain; it reads GGESGTATAT…EKVGNELGFA (222 aa).

It belongs to the radical SAM superfamily. Lipoyl synthase family. The cofactor is [4Fe-4S] cluster.

The protein localises to the mitochondrion. It catalyses the reaction [[Fe-S] cluster scaffold protein carrying a second [4Fe-4S](2+) cluster] + N(6)-octanoyl-L-lysyl-[protein] + 2 oxidized [2Fe-2S]-[ferredoxin] + 2 S-adenosyl-L-methionine + 4 H(+) = [[Fe-S] cluster scaffold protein] + N(6)-[(R)-dihydrolipoyl]-L-lysyl-[protein] + 4 Fe(3+) + 2 hydrogen sulfide + 2 5'-deoxyadenosine + 2 L-methionine + 2 reduced [2Fe-2S]-[ferredoxin]. The protein operates within protein modification; protein lipoylation via endogenous pathway; protein N(6)-(lipoyl)lysine from octanoyl-[acyl-carrier-protein]: step 2/2. Catalyzes the radical-mediated insertion of two sulfur atoms into the C-6 and C-8 positions of the octanoyl moiety bound to the lipoyl domains of lipoate-dependent enzymes, thereby converting the octanoylated domains into lipoylated derivatives. The chain is Lipoyl synthase, mitochondrial from Trichoplax adhaerens (Trichoplax reptans).